A 166-amino-acid chain; its full sequence is Small ribosomal subunit protein bS18m (166 aa).

The transit peptide at M1–F31 directs the protein to the mitochondrion. The segment at R29 to V48 is disordered. Residues G30–S42 are compositionally biased toward basic and acidic residues.

It belongs to the bacterial ribosomal protein bS18 family. In terms of assembly, component of the mitochondrial small ribosomal subunit (mt-SSU). Mature yeast 74S mitochondrial ribosomes consist of a small (37S) and a large (54S) subunit. The 37S small subunit contains a 15S ribosomal RNA (15S mt-rRNA) and at least 32 different proteins. The 54S large subunit contains a 21S rRNA (21S mt-rRNA) and at least 45 different proteins.

Its subcellular location is the mitochondrion. Its function is as follows. Component of the mitochondrial ribosome (mitoribosome), a dedicated translation machinery responsible for the synthesis of mitochondrial genome-encoded proteins, including at least some of the essential transmembrane subunits of the mitochondrial respiratory chain. The mitoribosomes are attached to the mitochondrial inner membrane and translation products are cotranslationally integrated into the membrane. This chain is Small ribosomal subunit protein bS18m (rsm18), found in Schizosaccharomyces pombe (strain 972 / ATCC 24843) (Fission yeast).